A 529-amino-acid polypeptide reads, in one-letter code: DEP domain-containing protein 1B (529 aa).

The DEP domain maps to 24–108; the sequence is FRAKMPLRKH…DNRHLYRFPP (85 aa). S160 bears the Phosphoserine mark. A Rho-GAP domain is found at 201–393; that stretch reads DSLEEVLDVK…FLMDNYQEIL (193 aa). Position 436 is a phosphoserine (S436).

The protein is DEP domain-containing protein 1B (DEPDC1B) of Homo sapiens (Human).